The following is a 399-amino-acid chain: Acetate kinase (399 aa).

Residue N7 coordinates Mg(2+). An ATP-binding site is contributed by K14. A substrate-binding site is contributed by R91. Residue D148 is the Proton donor/acceptor of the active site. Residues 208–212, 283–285, and 331–335 each bind ATP; these read HLGNG, DFR, and GIGEN. E384 contacts Mg(2+).

The protein belongs to the acetokinase family. In terms of assembly, homodimer. Mg(2+) is required as a cofactor. It depends on Mn(2+) as a cofactor.

The protein resides in the cytoplasm. The enzyme catalyses acetate + ATP = acetyl phosphate + ADP. Its pathway is metabolic intermediate biosynthesis; acetyl-CoA biosynthesis; acetyl-CoA from acetate: step 1/2. Its function is as follows. Catalyzes the formation of acetyl phosphate from acetate and ATP. Can also catalyze the reverse reaction. This is Acetate kinase from Acetivibrio thermocellus (strain ATCC 27405 / DSM 1237 / JCM 9322 / NBRC 103400 / NCIMB 10682 / NRRL B-4536 / VPI 7372) (Clostridium thermocellum).